Here is a 216-residue protein sequence, read N- to C-terminus: Penicillin-binding protein activator LpoB (216 aa).

An N-terminal signal peptide occupies residues 1–20 (MIKNLSRYALVTAFALFLSG). A lipid anchor (N-palmitoyl cysteine) is attached at cysteine 21. A lipid anchor (S-diacylglycerol cysteine) is attached at cysteine 21. The disordered stretch occupies residues 28–77 (QPAPVDEAKPGTEQPAQPTQPVPTVPSVPTVPAQPGPIEHPDQTSQPAPR).

It belongs to the LpoB family. As to quaternary structure, interacts with PBP1b.

Its subcellular location is the cell outer membrane. In terms of biological role, regulator of peptidoglycan synthesis that is essential for the function of penicillin-binding protein 1B (PBP1b). The protein is Penicillin-binding protein activator LpoB of Enterobacter sp. (strain 638).